A 490-amino-acid polypeptide reads, in one-letter code: Ribulose bisphosphate carboxylase large chain (490 aa).

Residues Asn127 and Thr177 each contribute to the substrate site. The active-site Proton acceptor is Lys179. Lys181 is a binding site for substrate. Mg(2+) is bound by residues Lys205, Asp207, and Glu208. Lys205 carries the N6-carboxylysine modification. The Proton acceptor role is filled by His297. Residues Arg298, His330, and Ser382 each coordinate substrate.

Belongs to the RuBisCO large chain family. Type I subfamily. In terms of assembly, heterohexadecamer of 8 large chains and 8 small chains. Requires Mg(2+) as cofactor.

The protein resides in the plastid. It localises to the chloroplast. It carries out the reaction 2 (2R)-3-phosphoglycerate + 2 H(+) = D-ribulose 1,5-bisphosphate + CO2 + H2O. The catalysed reaction is D-ribulose 1,5-bisphosphate + O2 = 2-phosphoglycolate + (2R)-3-phosphoglycerate + 2 H(+). RuBisCO catalyzes two reactions: the carboxylation of D-ribulose 1,5-bisphosphate, the primary event in carbon dioxide fixation, as well as the oxidative fragmentation of the pentose substrate in the photorespiration process. Both reactions occur simultaneously and in competition at the same active site. The chain is Ribulose bisphosphate carboxylase large chain from Phaeodactylum tricornutum (strain CCAP 1055/1).